The primary structure comprises 108 residues: Nucleoid-associated protein ACP_0492 (108 aa).

Belongs to the YbaB/EbfC family. Homodimer.

The protein localises to the cytoplasm. It localises to the nucleoid. Functionally, binds to DNA and alters its conformation. May be involved in regulation of gene expression, nucleoid organization and DNA protection. The polypeptide is Nucleoid-associated protein ACP_0492 (Acidobacterium capsulatum (strain ATCC 51196 / DSM 11244 / BCRC 80197 / JCM 7670 / NBRC 15755 / NCIMB 13165 / 161)).